Consider the following 314-residue polypeptide: MMMVLRNLSMEPTFALLGFTDYPKLQIPLFLVFLLMYVITVVGNLGMIIIIKINPKFHTPMYFFLSHLSFVDFCYSSIVTPKLLENLVMADKSIFYFSCMMQYFLSCTAVVTESFLLAVMAYDRFVAICNPLLYTVAMSQRLCALLVAGSYLWGMFGPLVLLCYALRLNFSGPNVINHFFCEYTALISVSGSDILIPHLLLFSFATFNEMCTLLIILTSYVFIFVTVLKIRSVSGRHKAFSTWASHLTSITIFHGTILFLYCVPNSKNSRQTVKVASVFYTVVNPMLNPLIYSLRNKDVKDAFWKLIHTQVPFH.

The Extracellular portion of the chain corresponds to 1 to 27 (MMMVLRNLSMEPTFALLGFTDYPKLQI). Asn-7 carries an N-linked (GlcNAc...) asparagine glycan. A helical membrane pass occupies residues 28–48 (PLFLVFLLMYVITVVGNLGMI). Topologically, residues 49–56 (IIIKINPK) are cytoplasmic. Residues 57-77 (FHTPMYFFLSHLSFVDFCYSS) form a helical membrane-spanning segment. At 78–101 (IVTPKLLENLVMADKSIFYFSCMM) the chain is on the extracellular side. Residues 102 to 122 (QYFLSCTAVVTESFLLAVMAY) traverse the membrane as a helical segment. Topologically, residues 123–141 (DRFVAICNPLLYTVAMSQR) are cytoplasmic. A helical membrane pass occupies residues 142–162 (LCALLVAGSYLWGMFGPLVLL). The Extracellular portion of the chain corresponds to 163–198 (CYALRLNFSGPNVINHFFCEYTALISVSGSDILIPH). The N-linked (GlcNAc...) asparagine glycan is linked to Asn-169. A helical membrane pass occupies residues 199–219 (LLLFSFATFNEMCTLLIILTS). Residues 220–239 (YVFIFVTVLKIRSVSGRHKA) are Cytoplasmic-facing. A helical transmembrane segment spans residues 240–260 (FSTWASHLTSITIFHGTILFL). Residues 261–273 (YCVPNSKNSRQTV) lie on the Extracellular side of the membrane. Residues 274–294 (KVASVFYTVVNPMLNPLIYSL) traverse the membrane as a helical segment. The Cytoplasmic portion of the chain corresponds to 295-314 (RNKDVKDAFWKLIHTQVPFH).

The protein belongs to the G-protein coupled receptor 1 family.

It is found in the cell membrane. Functionally, odorant receptor. This is Olfactory receptor 5D14 (OR5D14) from Homo sapiens (Human).